The primary structure comprises 446 residues: uncharacterized protein (446 aa).

Disordered regions lie at residues 63 to 95 and 155 to 232; these read KNKP…SDLR and AESS…HPVK. A compositionally biased stretch (polar residues) spans 156–169; that stretch reads ESSVPTPKLTNESN. Basic and acidic residues-rich tracts occupy residues 182 to 199 and 213 to 227; these read DQHE…DHSA and ITKE…EARK.

This is an uncharacterized protein from Mus musculus (Mouse).